Reading from the N-terminus, the 188-residue chain is Elongation factor P (188 aa).

Position 34 is an N6-(3,6-diaminohexanoyl)-5-hydroxylysine (K34).

The protein belongs to the elongation factor P family. May be beta-lysylated on the epsilon-amino group of Lys-34 by the combined action of EpmA and EpmB, and then hydroxylated on the C5 position of the same residue by EpmC (if this protein is present). Lysylation is critical for the stimulatory effect of EF-P on peptide-bond formation. The lysylation moiety may extend toward the peptidyltransferase center and stabilize the terminal 3-CCA end of the tRNA. Hydroxylation of the C5 position on Lys-34 may allow additional potential stabilizing hydrogen-bond interactions with the P-tRNA.

It localises to the cytoplasm. It functions in the pathway protein biosynthesis; polypeptide chain elongation. Its function is as follows. Involved in peptide bond synthesis. Alleviates ribosome stalling that occurs when 3 or more consecutive Pro residues or the sequence PPG is present in a protein, possibly by augmenting the peptidyl transferase activity of the ribosome. Modification of Lys-34 is required for alleviation. The protein is Elongation factor P of Pectobacterium carotovorum subsp. carotovorum (strain PC1).